Here is a 563-residue protein sequence, read N- to C-terminus: Alpha-humulene synthase (563 aa).

The Mg(2+) site is built by Asp316, Asp320, Asp461, and Glu469. Positions 316–320 match the DDXXD motif motif; that stretch reads DDIYD.

The protein belongs to the terpene synthase family. Tpsa subfamily. The cofactor is Mg(2+). Requires Mn(2+) as cofactor. Expressed in trichomes, cones and young leaves.

The enzyme catalyses (2E,6E)-farnesyl diphosphate = alpha-humulene + diphosphate. The protein operates within sesquiterpene biosynthesis. It functions in the pathway secondary metabolite biosynthesis; terpenoid biosynthesis. Its function is as follows. Sesquiterpene synthase that catalyzes the formation of alpha-humulene. Can use farnesyl diphosphate (FPP) as substrate, but not geranyl diphosphate (GPP) or geranylgeranyl diphosphate (GGPP). The polypeptide is Alpha-humulene synthase (Humulus lupulus (European hop)).